The chain runs to 95 residues: Protein TusB (95 aa).

The protein belongs to the DsrH/TusB family. Heterohexamer, formed by a dimer of trimers. The hexameric TusBCD complex contains 2 copies each of TusB, TusC and TusD. The TusBCD complex interacts with TusE.

The protein localises to the cytoplasm. Part of a sulfur-relay system required for 2-thiolation of 5-methylaminomethyl-2-thiouridine (mnm(5)s(2)U) at tRNA wobble positions. The polypeptide is Protein TusB (Klebsiella pneumoniae subsp. pneumoniae (strain ATCC 700721 / MGH 78578)).